A 428-amino-acid polypeptide reads, in one-letter code: Kynureninase (428 aa).

Residues threonine 104, threonine 105, 132–135 (FPSD), aspartate 213, histidine 216, and tyrosine 238 contribute to the pyridoxal 5'-phosphate site. The residue at position 239 (lysine 239) is an N6-(pyridoxal phosphate)lysine. Residues tryptophan 267 and threonine 295 each contribute to the pyridoxal 5'-phosphate site.

The protein belongs to the kynureninase family. As to quaternary structure, homodimer. It depends on pyridoxal 5'-phosphate as a cofactor.

The enzyme catalyses L-kynurenine + H2O = anthranilate + L-alanine + H(+). It carries out the reaction 3-hydroxy-L-kynurenine + H2O = 3-hydroxyanthranilate + L-alanine + H(+). It participates in amino-acid degradation; L-kynurenine degradation; L-alanine and anthranilate from L-kynurenine: step 1/1. The protein operates within cofactor biosynthesis; NAD(+) biosynthesis; quinolinate from L-kynurenine: step 2/3. In terms of biological role, catalyzes the cleavage of L-kynurenine (L-Kyn) and L-3-hydroxykynurenine (L-3OHKyn) into anthranilic acid (AA) and 3-hydroxyanthranilic acid (3-OHAA), respectively. This Bacillus thuringiensis subsp. konkukian (strain 97-27) protein is Kynureninase.